The following is a 376-amino-acid chain: Alanine racemase 1 (376 aa).

The active-site Proton acceptor; specific for D-alanine is Lys-40. At Lys-40 the chain carries N6-(pyridoxal phosphate)lysine. Arg-138 is a binding site for substrate. Tyr-268 functions as the Proton acceptor; specific for L-alanine in the catalytic mechanism. Position 316 (Met-316) interacts with substrate.

It belongs to the alanine racemase family. It depends on pyridoxal 5'-phosphate as a cofactor.

It carries out the reaction L-alanine = D-alanine. Its pathway is amino-acid biosynthesis; D-alanine biosynthesis; D-alanine from L-alanine: step 1/1. Its function is as follows. Catalyzes the interconversion of L-alanine and D-alanine. May also act on other amino acids. This is Alanine racemase 1 (alr1) from Oceanobacillus iheyensis (strain DSM 14371 / CIP 107618 / JCM 11309 / KCTC 3954 / HTE831).